Reading from the N-terminus, the 351-residue chain is uncharacterized protein (351 aa).

Residues 1–32 (MKNKKRVFIASSLSCVLLLLSAANTEANSANK) form the signal peptide. The tract at residues 26–74 (EANSANKDSQDQTKKEHVDKAQQKEKRNVNDKDKNTPGPDDIGKNGKVT) is disordered. Over residues 33 to 60 (DSQDQTKKEHVDKAQQKEKRNVNDKDKN) the composition is skewed to basic and acidic residues.

It belongs to the aerolysin family.

This is an uncharacterized protein from Staphylococcus aureus (strain MRSA252).